The chain runs to 200 residues: ATP-dependent Clp protease proteolytic subunit 2 (200 aa).

The active-site Nucleophile is the Ser101. Residue His126 is part of the active site.

The protein belongs to the peptidase S14 family. In terms of assembly, fourteen ClpP subunits assemble into 2 heptameric rings which stack back to back to give a disk-like structure with a central cavity, resembling the structure of eukaryotic proteasomes.

It is found in the cytoplasm. It catalyses the reaction Hydrolysis of proteins to small peptides in the presence of ATP and magnesium. alpha-casein is the usual test substrate. In the absence of ATP, only oligopeptides shorter than five residues are hydrolyzed (such as succinyl-Leu-Tyr-|-NHMec, and Leu-Tyr-Leu-|-Tyr-Trp, in which cleavage of the -Tyr-|-Leu- and -Tyr-|-Trp bonds also occurs).. Cleaves peptides in various proteins in a process that requires ATP hydrolysis. Has a chymotrypsin-like activity. Plays a major role in the degradation of misfolded proteins. The protein is ATP-dependent Clp protease proteolytic subunit 2 of Prochlorococcus marinus (strain NATL2A).